Reading from the N-terminus, the 484-residue chain is MATAVNGAPRDAALWSSHEQMLAQPLKDSDAEVYDIIKKESNRQRVGLELIASENFASRAVLEALGSCLNNKYSEGYPGQRYYGGTEHIDELETLCQKRALQAYGLDPQCWGVNVQPYSGSPANFAVYTALVEPHGRIMGLDLPDGGHLTHGFMTDKKKISATSIFFESMAYKVNPDTGYIDYDRLEENARLFHPKLIIAGTSCYSRNLDYGRLRKIADENGAYLMADMAHISGLVVAGVVPSPFEHCHVVTTTTHKTLRGCRAGMIFYRRGVRSVDPKTGKEILYNLESLINSAVFPGLQGGPHNHAIAGVAVALKQAMTPEFKEYQRQVVANCRALSAALVELGYKIVTGGSDNHLILVDLRSKGTDGGRAEKVLEACSIACNKNTCPGDKSALRPSGLRLGTPALTSRGLLEKDFQKVAHFIHRGIELTVQIQDDTGPRATLKEFKEKLAGDEKHQRAVRALRQEVESFAALFPLPGLPGF.

A2 carries the post-translational modification N-acetylalanine. A Deamidated asparagine; alternate modification is found at N6. Residues 6 to 7 (NG) constitute a cross-link (isoaspartyl glycine isopeptide (Asn-Gly); alternate). Catalysis depends on C204, which acts as the Nucleophile. H256 acts as the Proton donor in catalysis. K257 bears the N6-(pyridoxal phosphate)lysine mark.

It belongs to the SHMT family. As to quaternary structure, homotetramer. Identified in complex with ABRAXAS2 and the other subunits of the BRISC complex, at least composed of ABRAXAS2, BRCC3/BRCC36, BABAM2 and BABAM1/NBA1. Requires pyridoxal 5'-phosphate as cofactor. Deamidation of asparagine produces alternatively aspartate or isoaspartate, which in turn can be converted to aspartate through carboxylmethylation/demethylation.

Its subcellular location is the cytoplasm. It catalyses the reaction (6R)-5,10-methylene-5,6,7,8-tetrahydrofolate + glycine + H2O = (6S)-5,6,7,8-tetrahydrofolate + L-serine. It functions in the pathway one-carbon metabolism; tetrahydrofolate interconversion. Its function is as follows. Interconversion of serine and glycine. In Oryctolagus cuniculus (Rabbit), this protein is Serine hydroxymethyltransferase, cytosolic (SHMT1).